We begin with the raw amino-acid sequence, 842 residues long: MTFPLLPAYASVAEFDNSLSLVGKAVFPYAADQLHNLIKFTQSTELQVNVQVESSVTEDQFEELIDNLLKLYNNGINEVILDLDLAERVVQRIPGARVIYRTLVDKVASLPANASIAVPFSSPLGDLKSFTNGGSRTVYAFSETAKLVDVTSTVASGIIPIIDARQLTTEYELSEDVKKFPVSEILLASLTTDRPDGLFTTLVADSSNYSLGLVYSSKKSIPEAIRTQTGVYQSRRHGLWYKGATSGATQKLLGIELDCDGDCLKFVVEQTGVGFCHLERTSCFGQSKGLRAMEATLWDRKSNAPEGSYTKRLFDDEVLLNAKIREEADELAEAKSKEDIAWECADLFYFALVRCAKYGVTLDEVERNLDMKSLKVTRRKGDAKPGYTKEQPKEESKPKEVPSEGRIELCKIDVSKASSQEIEDALRRPIQKTEQIMELVKPIVDNVRQNGDKALLELTAKFDGVALKTPVLEAPFPEELMQLPDNVKRAIDLSIDNVRKFHEAQLAETLQVETCPGVVCSRFARPIEKVGLYIPGGTAILPSTSLMLGVPAKVAGCKEIVFASPPKKDGTLTPEVIYVAHKVGAKCIVLAGGAQAVAAMAYGTETVPKCDKIFGPGNQFVTAAKMMVQNDTSALCSIDMPAGPSEVLVIADKYADPDFVVSDLLSQAEHGIDSQVILLAVDMTDKELARIEDAVHNQAVQLPRVEIVRKCIAHSTTLSVATYEQALEMSNQYAPEHLILQIENASYVDQVQHAGSVFVGAYSPESCGDYSSGTNHTLPTYGYARQYSGVNTATFQKFITSQDVTPEGLKHIGQAVMDLAAVEGLDAHRNAVKVRMEKLGLI.

A phosphoribosyl-AMP cyclohydrolase region spans residues 1-275 (MTFPLLPAYA…FVVEQTGVGF (275 aa)). The interval 276–357 (CHLERTSCFG…FYFALVRCAK (82 aa)) is phosphoribosyl-ATP pyrophosphohydrolase. Positions 358–842 (YGVTLDEVER…KVRMEKLGLI (485 aa)) are histidinol dehydrogenase. Residues 380–403 (KGDAKPGYTKEQPKEESKPKEVPS) are disordered. A compositionally biased stretch (basic and acidic residues) spans 390-403 (EQPKEESKPKEVPS). Q667 and H670 together coordinate Zn(2+). Residues E736 and H737 contribute to the active site. 2 residues coordinate Zn(2+): D769 and H828.

This sequence in the C-terminal section; belongs to the histidinol dehydrogenase family. It depends on Zn(2+) as a cofactor.

The enzyme catalyses 1-(5-phospho-beta-D-ribosyl)-5'-AMP + H2O = 1-(5-phospho-beta-D-ribosyl)-5-[(5-phospho-beta-D-ribosylamino)methylideneamino]imidazole-4-carboxamide. It carries out the reaction 1-(5-phospho-beta-D-ribosyl)-ATP + H2O = 1-(5-phospho-beta-D-ribosyl)-5'-AMP + diphosphate + H(+). The catalysed reaction is L-histidinol + 2 NAD(+) + H2O = L-histidine + 2 NADH + 3 H(+). It functions in the pathway amino-acid biosynthesis; L-histidine biosynthesis; L-histidine from 5-phospho-alpha-D-ribose 1-diphosphate: step 2/9. The protein operates within amino-acid biosynthesis; L-histidine biosynthesis; L-histidine from 5-phospho-alpha-D-ribose 1-diphosphate: step 3/9. Its pathway is amino-acid biosynthesis; L-histidine biosynthesis; L-histidine from 5-phospho-alpha-D-ribose 1-diphosphate: step 9/9. The polypeptide is Histidine biosynthesis trifunctional protein (HIS4) (Komagataella pastoris (Yeast)).